The chain runs to 283 residues: Non-selective voltage-gated ion channel VDAC1 (283 aa).

Position 2 is an N-acetylalanine (alanine 2). Lysine 12 serves as a coordination point for ATP. A Glycyl lysine isopeptide (Lys-Gly) (interchain with G-Cter in ubiquitin) cross-link involves residue lysine 12. Residue serine 13 is modified to Phosphoserine. Threonine 19 is subject to Phosphothreonine. Lysine 20 lines the ATP pocket. Lysine 20 bears the N6-acetyllysine; alternate mark. The residue at position 20 (lysine 20) is an N6-succinyllysine; alternate. Residue lysine 20 forms a Glycyl lysine isopeptide (Lys-Gly) (interchain with G-Cter in ubiquitin); alternate linkage. 2 consecutive transmembrane segments (beta stranded) span residues 26–35 and 39–47; these read LIKLDLKTKS and LEFTSSGSA. Glycyl lysine isopeptide (Lys-Gly) (interchain with G-Cter in ubiquitin) cross-links involve residues lysine 53 and lysine 61. A beta stranded membrane pass occupies residues 54–64; it reads VNGSLETKYRW. Tyrosine 67 bears the Phosphotyrosine mark. A run of 3 beta stranded transmembrane segments spans residues 69–76, 80–89, and 95–104; these read LTFTEKWN, TLGTEITVED, and LKLTFDSSFS. Threonine 107 is modified (phosphothreonine). Lysine 109 carries the post-translational modification N6-acetyllysine; alternate. A Glycyl lysine isopeptide (Lys-Gly) (interchain with G-Cter in ubiquitin); alternate cross-link involves residue lysine 109. Lysine 110 is covalently cross-linked (Glycyl lysine isopeptide (Lys-Gly) (interchain with G-Cter in ubiquitin)). Beta stranded transmembrane passes span 111 to 120, 123 to 130, 137 to 145, and 150 to 158; these read NAKIKTGYKR, INLGCDVD, SIRGALVLG, and LAGYQMNFE. Serine 137 carries the phosphoserine modification. A Glycyl lysine isopeptide (Lys-Gly) (interchain with G-Cter in ubiquitin) cross-link involves residue lysine 161. The next 6 membrane-spanning stretches (beta stranded) occupy residues 163-175, 178-185, 189-198, 202-211, 218-227, and 231-238; these read RVTQSNFAVGYKT, FQLHTNVN, EFGGSIYQKV, LETAVNLAWT, RFGIAAKYQV, and ACFSAKVN. Position 193 is a phosphoserine; by NEK1 (serine 193). At serine 240 the chain carries Phosphoserine. An NAD(+)-binding site is contributed by 242 to 244; sequence LIG. The beta stranded transmembrane segment at 242–251 threads the bilayer; that stretch reads LIGLGYTQTL. Lysine 252 is modified (N6-acetyllysine). Residues 254–263 form a beta stranded membrane-spanning segment; sequence GIKLTLSALL. NAD(+) is bound at residue 260 to 264; it reads SALLD. Lysine 266 is subject to N6-acetyllysine; alternate. A Glycyl lysine isopeptide (Lys-Gly) (interchain with G-Cter in ubiquitin); alternate cross-link involves residue lysine 266. A beta stranded membrane pass occupies residues 273-282; it reads HKLGLGLEFQ. A Glycyl lysine isopeptide (Lys-Gly) (interchain with G-Cter in ubiquitin) cross-link involves residue lysine 274.

It belongs to the eukaryotic mitochondrial porin family. As to quaternary structure, homodimer and homotrimer; in response to cyclic AMP or calcium; oligomerization is required for scramblase activity. Component of the mitochondrial permeability transition pore complex (mPTPC), at least composed of SPG7, VDAC1 and PPIF. Interacts with SPG7, NIPSNAP2 and SLC25A30. Interacts with hexokinases including HK1. The HK1-VDAC1 complex interacts with ATF2. Interacts with BCL2L1. Interacts with BAK1. Interacts with RTL10/BOP (via BH3 domain). Interacts with amyloid-beta and APP; induces VDAC1 dephosphorylation. Interacts with TMEM41B. Interacts with BCAP31. Interacts with HSPA9; this interaction couples ITPR1 to VDAC1. In terms of processing, phosphorylation at Ser-193 by NEK1 promotes the closed conformational state preventing excessive mitochondrial membrane permeability and subsequent apoptotic cell death after injury. Phosphorylation by the AKT-GSK3B axis stabilizes the protein probably by preventing ubiquitin-mediated proteasomal degradation. Post-translationally, ubiquitinated. Undergoes monoubiquitination and polyubiquitination by PRKN; monoubiquitination at Lys-274 inhibits apoptosis, whereas polyubiquitination leads to its degradation and promotes mitophagy. Deubiquitinated by USP30. As to expression, widely expressed. High levels in heart and kidney with lower levels in brain and ascitic tumor. Very low levels in liver.

The protein resides in the mitochondrion outer membrane. The protein localises to the cell membrane. It is found in the membrane raft. The catalysed reaction is Ca(2+)(in) = Ca(2+)(out). It catalyses the reaction Na(+)(in) = Na(+)(out). The enzyme catalyses chloride(in) = chloride(out). It carries out the reaction Mg(2+)(in) = Mg(2+)(out). The catalysed reaction is K(+)(in) = K(+)(out). It catalyses the reaction ATP(in) = ATP(out). The enzyme catalyses L-glutamate(out) = L-glutamate(in). It carries out the reaction dopamine(out) = dopamine(in). The catalysed reaction is acetylcholine(in) = acetylcholine(out). It catalyses the reaction Fe(III)-[cytochrome c](out) = Fe(III)-[cytochrome c](in). The enzyme catalyses a 1,2-diacyl-sn-glycero-3-phosphocholine(in) = a 1,2-diacyl-sn-glycero-3-phosphocholine(out). It carries out the reaction a 1,2-diacyl-sn-glycero-3-phospho-L-serine(in) = a 1,2-diacyl-sn-glycero-3-phospho-L-serine(out). With respect to regulation, inhibited by nitric oxide. Voltage-gated ion channel activity is inhibited by lanthanum(3+) and ruthenium red. Mitochondrial calcium transport is inhibited by lanthanum(3+), ruthenium red and Ru360. Its function is as follows. Non-selective voltage-gated ion channel that mediates the transport of anions and cations through the mitochondrion outer membrane and plasma membrane. The channel at the outer mitochondrial membrane allows diffusion of small hydrophilic molecules; in the plasma membrane it is involved in cell volume regulation and apoptosis. It adopts an open conformation at low or zero membrane potential and a closed conformation at potentials above 30-40 mV. The open state has a weak anion selectivity whereas the closed state is cation-selective. Binds various signaling molecules, including the sphingolipid ceramide, the phospholipid phosphatidylcholine, and the sterols cholesterol and oxysterol. In depolarized mitochondria, acts downstream of PRKN and PINK1 to promote mitophagy or prevent apoptosis; polyubiquitination by PRKN promotes mitophagy, while monoubiquitination by PRKN decreases mitochondrial calcium influx which ultimately inhibits apoptosis. May participate in the formation of the permeability transition pore complex (PTPC) responsible for the release of mitochondrial products that triggers apoptosis. May mediate ATP export from cells. Part of a complex composed of HSPA9, ITPR1 and VDAC1 that regulates mitochondrial calcium-dependent apoptosis by facilitating calcium transport from the ER lumen to the mitochondria intermembrane space thus providing calcium for the downstream calcium channel MCU that directly releases it into mitochondria matrix. In terms of biological role, catalyzes the scrambling of phospholipids across the outer mitochondrial membrane; the mechanism is unrelated to channel activity and is capable of translocating both anionic and zwitterionic phospholipids. The chain is Non-selective voltage-gated ion channel VDAC1 from Rattus norvegicus (Rat).